A 529-amino-acid polypeptide reads, in one-letter code: Bifunctional purine biosynthesis protein PurH (529 aa).

One can recognise an MGS-like domain in the interval 1–148 (MQQRRPIRRA…KNHKDVAIVV (148 aa)).

The protein belongs to the PurH family.

The enzyme catalyses (6R)-10-formyltetrahydrofolate + 5-amino-1-(5-phospho-beta-D-ribosyl)imidazole-4-carboxamide = 5-formamido-1-(5-phospho-D-ribosyl)imidazole-4-carboxamide + (6S)-5,6,7,8-tetrahydrofolate. The catalysed reaction is IMP + H2O = 5-formamido-1-(5-phospho-D-ribosyl)imidazole-4-carboxamide. It functions in the pathway purine metabolism; IMP biosynthesis via de novo pathway; 5-formamido-1-(5-phospho-D-ribosyl)imidazole-4-carboxamide from 5-amino-1-(5-phospho-D-ribosyl)imidazole-4-carboxamide (10-formyl THF route): step 1/1. It participates in purine metabolism; IMP biosynthesis via de novo pathway; IMP from 5-formamido-1-(5-phospho-D-ribosyl)imidazole-4-carboxamide: step 1/1. The polypeptide is Bifunctional purine biosynthesis protein PurH (Yersinia pseudotuberculosis serotype O:1b (strain IP 31758)).